Here is a 652-residue protein sequence, read N- to C-terminus: Coiled-coil domain-containing protein 81 (652 aa).

Ser-206 carries the post-translational modification Phosphoserine. Residues 238–256 (KCKLKDQSDKEEGTRDISS) show a composition bias toward basic and acidic residues. The interval 238-258 (KCKLKDQSDKEEGTRDISSPK) is disordered. Phosphoserine occurs at positions 275, 296, and 417. Residues 436–493 (MDNRQENEIKQRQYRELMDRLEQVQLTEELAAQRAKFLKDKMEETQCYKRALDAQIKN) are a coiled coil.

The protein resides in the cytoplasm. It localises to the cytoskeleton. It is found in the microtubule organizing center. Its subcellular location is the centrosome. This Homo sapiens (Human) protein is Coiled-coil domain-containing protein 81 (CCDC81).